Here is a 674-residue protein sequence, read N- to C-terminus: CLK4-associating serine/arginine rich protein (674 aa).

S101 bears the Phosphoserine mark. Disordered regions lie at residues T171–D232 and E258–H674. Residues P182 to N214 show a composition bias toward acidic residues. Residues R265–K283 are compositionally biased toward basic residues. S285 and S294 each carry phosphoserine. Basic and acidic residues predominate over residues A290–S313. T327 carries the post-translational modification Phosphothreonine. Residues S331 and S335 each carry the phosphoserine modification. Over residues P356–P365 the composition is skewed to pro residues. A compositionally biased stretch (low complexity) spans S378–S399. 2 stretches are compositionally biased toward basic residues: residues S411 to S443 and R481 to S492. Low complexity-rich tracts occupy residues R493–R506 and H514–P532. S547 carries the post-translational modification Phosphoserine. T573 bears the Phosphothreonine mark. Residues A585–S647 adopt a coiled-coil conformation. Basic and acidic residues-rich tracts occupy residues F590–A617 and K625–Y641. Over residues S642–R651 the composition is skewed to low complexity. Residues S659–H674 show a composition bias toward basic residues.

The protein belongs to the splicing factor SR family. As to quaternary structure, probably interacts with CLK4. Phosphorylated in vitro by CLK4.

Its subcellular location is the nucleus. Its function is as follows. Probably functions as an alternative splicing regulator. May regulate the mRNA splicing of genes such as CLK1. May act by regulating members of the CLK kinase family. The chain is CLK4-associating serine/arginine rich protein (CLASRP) from Homo sapiens (Human).